The primary structure comprises 348 residues: Protein-arginine N-acetylglucosaminyltransferase SseK2 (348 aa).

UDP-N-acetyl-alpha-D-glucosamine contacts are provided by residues 64–66 (QWF), Tyr-88, and 237–240 (YLDA). Residues 239–241 (DAD) carry the DXD motif motif. A Mn(2+)-binding site is contributed by Asp-241. Residue Glu-271 is the Proton acceptor of the active site. Residues Asn-338, Ser-340, and 345–348 (SSWR) contribute to the UDP-N-acetyl-alpha-D-glucosamine site. Mn(2+)-binding residues include Asn-338 and Ser-340.

Belongs to the glycosyltransferase NleB family. Mn(2+) serves as cofactor.

The protein localises to the secreted. Its subcellular location is the host Golgi apparatus. The catalysed reaction is L-arginyl-[protein] + UDP-N-acetyl-alpha-D-glucosamine = N(omega)-(N-acetyl-beta-D-glucosaminyl)-L-arginyl-[protein] + UDP + H(+). Protein-arginine N-acetylglucosaminyltransferase activity is inhibited by 100066N compound (flavone analog) and 102644N compound (a substituted isoxazole). In terms of biological role, protein-arginine N-acetylglucosaminyltransferase effector that catalyzes the transfer of a single N-acetylglucosamine (GlcNAc) to a conserved arginine residue in the death domain of host proteins such as FADD: arginine GlcNAcylation prevents homotypic/heterotypic death domain interactions. Also acts on host proteins without a death domain: catalyzes arginine GlcNAcylation of host small Rab1 GTPase, thereby preventing GTPase activity and leading to impaired host vesicular protein transport. In contrast to Ssek1, not able to disrupt TNF signaling in infected cells. The protein is Protein-arginine N-acetylglucosaminyltransferase SseK2 of Salmonella typhimurium (strain SL1344).